A 114-amino-acid chain; its full sequence is Amphinase-1 (114 aa).

His-15 serves as the catalytic Proton acceptor. Cystine bridges form between Cys-26/Cys-79, Cys-41/Cys-85, Cys-59/Cys-100, and Cys-97/Cys-114. Asn-27 carries N-linked (GlcNAc...) asparagine glycosylation. Position 42 to 46 (42 to 46 (KPVNT)) interacts with substrate. Residues Asn-67 and Asn-91 are each glycosylated (N-linked (GlcNAc...) asparagine). The Proton donor role is filled by His-107.

The protein belongs to the pancreatic ribonuclease family. In terms of assembly, monomer. There are at least five different forms arising from glycan heterogeneity.

Its subcellular location is the secreted. Functionally, endonuclease, hydrolyzes highly polymerized RNA, poly(U) and poly(C), and the dinucleotides CpA and UpA. More active towards rCA than rUA or rUG. Has cytotoxic activity against cultured human submaxillary gland carcinoma cells. This chain is Amphinase-1, found in Lithobates pipiens (Northern leopard frog).